A 504-amino-acid polypeptide reads, in one-letter code: Sodium-coupled neutral amino acid symporter 2 (504 aa).

Residues 1-28 (MNKAPAQMSRFNIAPDMDSSSTNSNEYT) form a disordered region. The Cytoplasmic segment spans residues 1 to 79 (MNKAPAQMSR…SPGSASFGMS (79 aa)). The regulates protein turnover upon amino acid deprivation stretch occupies residues 1 to 99 (MNKAPAQMSR…SGILGLSYAM (99 aa)). Over residues 19–28 (SSSTNSNEYT) the composition is skewed to low complexity. A helical transmembrane segment spans residues 80–99 (VFNLGNAIMGSGILGLSYAM). Na(+) is bound at residue Asn-85. Topologically, residues 100–105 (ANTGIA) are extracellular. Residues 106 to 126 (MFVILLVAVAIFSLYSVHLLL) traverse the membrane as a helical segment. Over 127–161 (KTANEGGSLVYEQLGYKAFGIPGKLAASCSITMQN) the chain is Cytoplasmic. Residues 162–180 (FGAMASYLYIVKYELPIVI) form a helical membrane-spanning segment. Residues 181–189 (RAFLDSNDN) lie on the Extracellular side of the membrane. Residues 190-210 (AWYTNGDYLVLIVTMSIILPL) form a helical membrane-spanning segment. The Cytoplasmic segment spans residues 211-218 (SLLKNLGY). The helical transmembrane segment at 219–239 (LGYTSGFSLLCMVFFLIVVIY) threads the bilayer. Residues 240-285 (KKFQIPCPLPENFINITVNVSQPPQTNNSTDEECCKPKYFIFNSQT) lie on the Extracellular side of the membrane. Cys-246 and Cys-274 are joined by a disulfide. N-linked (GlcNAc...) asparagine glycans are attached at residues Asn-254 and Asn-258. The helical transmembrane segment at 286 to 306 (VYAVPILTFAFVCHPAILPMY) threads the bilayer. The Cytoplasmic portion of the chain corresponds to 307-322 (EELKDRSRRKMQNVAN). Residues 323-343 (VSFLGMFIMYLLAALFGYLTF) traverse the membrane as a helical segment. The Extracellular portion of the chain corresponds to 344 to 364 (NEAVEPELLHTYSKVYNFDVV). Residues 365-385 (LLIVRLAVLTAVTLTVPVVLF) traverse the membrane as a helical segment. Na(+) is bound at residue Thr-379. The Cytoplasmic portion of the chain corresponds to 386 to 406 (PIRTSVNHLLGASKEFSWPRH). Residues 407-427 (ICITVALLVCVNILVIFVPTI) traverse the membrane as a helical segment. Residues 428 to 429 (RD) lie on the Extracellular side of the membrane. A helical transmembrane segment spans residues 430-450 (IFGFIGASAAAMLIFILPSAF). The Cytoplasmic portion of the chain corresponds to 451 to 465 (YIKLVKKESMKSVQK). A helical membrane pass occupies residues 466–488 (IGATLFLIMGFLVMTGSMALIIM). At 489-504 (DWIHNALSSEEHTGGH) the chain is on the extracellular side.

This sequence belongs to the amino acid/polyamine transporter 2 family.

The protein resides in the cell membrane. It carries out the reaction L-alanine(in) + Na(+)(in) = L-alanine(out) + Na(+)(out). The catalysed reaction is glycine(in) + Na(+)(in) = glycine(out) + Na(+)(out). It catalyses the reaction L-serine(in) + Na(+)(in) = L-serine(out) + Na(+)(out). The enzyme catalyses L-proline(in) + Na(+)(in) = L-proline(out) + Na(+)(out). It carries out the reaction L-methionine(in) + Na(+)(in) = L-methionine(out) + Na(+)(out). The catalysed reaction is L-histidine(in) + Na(+)(in) = L-histidine(out) + Na(+)(out). It catalyses the reaction L-asparagine(in) + Na(+)(in) = L-asparagine(out) + Na(+)(out). The enzyme catalyses L-glutamine(in) + Na(+)(in) = L-glutamine(out) + Na(+)(out). It carries out the reaction L-threonine(in) + Na(+)(in) = L-threonine(out) + Na(+)(out). The catalysed reaction is L-leucine(in) + Na(+)(in) = L-leucine(out) + Na(+)(out). It catalyses the reaction L-phenylalanine(in) + Na(+)(in) = L-phenylalanine(out) + Na(+)(out). With respect to regulation, inhibited by N-methyl-D-glucamine. Inhibited by choline. Allosteric regulation of sodium ions binding by pH. Symporter that cotransports neutral amino acids and sodium ions from the extracellular to the intracellular side of the cell membrane. The transport is pH-sensitive, Li(+)-intolerant, electrogenic, driven by the Na(+) electrochemical gradient and cotransports of neutral amino acids and sodium ions with a stoichiometry of 1:1. This chain is Sodium-coupled neutral amino acid symporter 2, found in Danio rerio (Zebrafish).